Consider the following 503-residue polypeptide: Trehalose-6-phosphate synthase (503 aa).

A compositionally biased stretch (polar residues) spans 1–14 (MTDQSGNGVRSGSA). A disordered region spans residues 1–20 (MTDQSGNGVRSGSASEAPPS). Residue arginine 31 participates in D-glucose 6-phosphate binding. 51-52 (GG) is a UDP-alpha-D-glucose binding site. Residues tyrosine 109 and aspartate 163 each coordinate D-glucose 6-phosphate. Arginine 305 and lysine 310 together coordinate UDP-alpha-D-glucose. Arginine 343 provides a ligand contact to D-glucose 6-phosphate. Residue 408 to 412 (LVAKE) participates in UDP-alpha-D-glucose binding.

Belongs to the glycosyltransferase 20 family. As to quaternary structure, homotetramer.

It catalyses the reaction ADP-alpha-D-glucose + D-glucose 6-phosphate = alpha,alpha-trehalose 6-phosphate + ADP + H(+). The enzyme catalyses CDP-alpha-D-glucose + D-glucose 6-phosphate = alpha,alpha-trehalose 6-phosphate + CDP + H(+). The catalysed reaction is GDP-alpha-D-glucose + D-glucose 6-phosphate = alpha,alpha-trehalose 6-phosphate + GDP + H(+). It carries out the reaction TDP-alpha-D-glucose + D-glucose 6-phosphate = 5-methyl-UDP + alpha,alpha-trehalose 6-phosphate + H(+). It catalyses the reaction D-glucose 6-phosphate + UDP-alpha-D-glucose = alpha,alpha-trehalose 6-phosphate + UDP + H(+). Its pathway is glycan biosynthesis; trehalose biosynthesis. Probably involved in the osmoprotection via the biosynthesis of trehalose and in the production of glycogen and alpha-glucan via the TreS-Pep2 branch involved in the biosynthesis of maltose-1-phosphate (M1P). Catalyzes the transfer of glucose from UDP-glucose (UDP-Glc) to D-glucose 6-phosphate (Glc-6-P) to form trehalose-6-phosphate. Probably also able to use ADP-Glc, CDP-Glc, GDP-Glc and TDP-Glc as glucosyl donors. This is Trehalose-6-phosphate synthase from Mycolicibacterium gilvum (strain PYR-GCK) (Mycobacterium gilvum (strain PYR-GCK)).